We begin with the raw amino-acid sequence, 774 residues long: DNA ligase 3 (774 aa).

A disordered region spans residues 1 to 25 (MPPKKRMKNGSSLKSTSKKGEKSRN). The active-site N6-AMP-lysine intermediate is Lys-433.

Belongs to the ATP-dependent DNA ligase family.

It localises to the nucleus. The catalysed reaction is ATP + (deoxyribonucleotide)n-3'-hydroxyl + 5'-phospho-(deoxyribonucleotide)m = (deoxyribonucleotide)n+m + AMP + diphosphate.. This Schizosaccharomyces pombe (strain 972 / ATCC 24843) (Fission yeast) protein is DNA ligase 3 (adl1).